The primary structure comprises 463 residues: Retinoic acid receptor RXR-gamma (463 aa).

The segment at 1-138 (MYGNYSHFMK…TSPGSLVKHI (138 aa)) is modulating. Residues 18-53 (SPGHTGSTSMSPSAALSTGKPMDSHPSYTDTPVSAP) form a disordered region. Positions 21–33 (HTGSTSMSPSAAL) are enriched in polar residues. The segment at residues 136–211 (KHICAICGDR…MGMKREAVQE (76 aa)) is a DNA-binding region (nuclear receptor). NR C4-type zinc fingers lie at residues 139 to 159 (CAIC…CEGC) and 175 to 199 (CRDN…YQKC). The interval 205 to 230 (KREAVQEERQRSRERAESEAECATSG) is hinge. Positions 231–459 (HEDMPVERIL…TFLMEMLETP (229 aa)) constitute an NR LBD domain.

This sequence belongs to the nuclear hormone receptor family. NR2 subfamily. As to quaternary structure, homodimer. Heterodimer with a RAR molecule. Binds DNA preferentially as a RAR/RXR heterodimer. Interacts with RARA. Post-translationally, acetylated by EP300. In terms of tissue distribution, expressed in aortic endothelial cells (at protein level).

The protein resides in the nucleus. It is found in the cytoplasm. Receptor for retinoic acid. Retinoic acid receptors bind as heterodimers to their target response elements in response to their ligands, all-trans or 9-cis retinoic acid, and regulate gene expression in various biological processes. The RAR/RXR heterodimers bind to the retinoic acid response elements (RARE) composed of tandem 5'-AGGTCA-3' sites known as DR1-DR5. The high affinity ligand for RXRs is 9-cis retinoic acid. The protein is Retinoic acid receptor RXR-gamma (RXRG) of Homo sapiens (Human).